The sequence spans 314 residues: Homoserine kinase (314 aa).

96–106 (PIGSGLGSSAC) lines the ATP pocket.

This sequence belongs to the GHMP kinase family. Homoserine kinase subfamily.

It is found in the cytoplasm. The enzyme catalyses L-homoserine + ATP = O-phospho-L-homoserine + ADP + H(+). The protein operates within amino-acid biosynthesis; L-threonine biosynthesis; L-threonine from L-aspartate: step 4/5. Functionally, catalyzes the ATP-dependent phosphorylation of L-homoserine to L-homoserine phosphate. In Haemophilus influenzae (strain 86-028NP), this protein is Homoserine kinase.